A 250-amino-acid chain; its full sequence is Urease accessory protein UreD (250 aa).

It belongs to the UreD family. In terms of assembly, ureD, UreF and UreG form a complex that acts as a GTP-hydrolysis-dependent molecular chaperone, activating the urease apoprotein by helping to assemble the nickel containing metallocenter of UreC. The UreE protein probably delivers the nickel.

The protein localises to the cytoplasm. In terms of biological role, required for maturation of urease via the functional incorporation of the urease nickel metallocenter. The protein is Urease accessory protein UreD of Aliarcobacter butzleri (strain RM4018) (Arcobacter butzleri).